The chain runs to 331 residues: Type 2 lactosamine alpha-2,3-sialyltransferase (331 aa).

Topologically, residues 1–4 (MKGY) are cytoplasmic. A helical; Signal-anchor for type II membrane protein membrane pass occupies residues 5-25 (VVAIFLSSIFLYYVLYCILWG). Over 26-331 (TNGYWFPNEE…KKMVINLTQN (306 aa)) the chain is Lumenal. Asn129, Asn181, Asn295, Asn308, and Asn327 each carry an N-linked (GlcNAc...) asparagine glycan.

It belongs to the glycosyltransferase 29 family.

The protein localises to the golgi apparatus membrane. It catalyses the reaction a neolactoside nLc4Cer(d18:1(4E)) + CMP-N-acetyl-beta-neuraminate = a neolactoside IV(3)-alpha-NeuAc-nLc4Cer(d18:1(4E)) + CMP + H(+). It carries out the reaction a beta-D-galactosyl-(1-&gt;4)-N-acetyl-beta-D-glucosaminyl derivative + CMP-N-acetyl-beta-neuraminate = an N-acetyl-alpha-neuraminyl-(2-&gt;3)-beta-D-galactosyl-(1-&gt;4)-N-acetyl-beta-D-glucosaminyl derivative + CMP + H(+). The enzyme catalyses a neolactoside nLc6Cer(d18:1(4E)) + CMP-N-acetyl-beta-neuraminate = a neolactoside VI(3)-alpha-NeuNAc-nLc6Cer(d18:1(4E)) + CMP + H(+). Transfers the sialyl residue from CMP-N-acetyl-beta-neuraminate to the terminal galactose residue on sugar chains of glycoproteins and glycolipids. It's alpha-2,3-sialyltransferase activity is specific toward type II glycan chains (Galbeta1-4GlcNAc) on glycoproteins and glycolipids such as neolactosides nLc4Cer and nLc6Cer, whose sialyl-products serve as precursors for the Lewis X antigen. Critically involved in the synthesis of functional selectin ligands needed for neutrophil recruitment during inflammation and lymphocyte homing to the lymph nodes. The chain is Type 2 lactosamine alpha-2,3-sialyltransferase (St3gal6) from Rattus norvegicus (Rat).